A 257-amino-acid chain; its full sequence is Transcription factor MYB4 (257 aa).

2 consecutive HTH myb-type domains span residues 9-61 and 62-116; these read KMGL…INYL and RPDI…KKRL. 2 consecutive DNA-binding regions (H-T-H motif) follow at residues 37–61 and 89–112; these read WRAL…INYL and WSAI…HTHL. Positions 115 to 179 are disordered; that stretch reads RLDAPAQGGH…VAEEHGNAGI (65 aa). The span at 130 to 140 shows a compositional bias: basic residues; the sequence is GKKHKKPKSAK. The segment covering 141-170 has biased composition (low complexity); it reads KPAAAAAAPPASPERSASSSVTESSMASSV.

It localises to the nucleus. In terms of biological role, transcriptional activator involved in cold stress response. Regulates positively the expression of genes involved in reactive oxygen species (ROS) scavenging such as peroxidase and superoxide dismutase during cold stress. Transactivates a complex gene network that have major effects on stress tolerance and panicle development. The polypeptide is Transcription factor MYB4 (Oryza sativa subsp. japonica (Rice)).